A 288-amino-acid chain; its full sequence is Urease accessory protein UreD 1 (288 aa).

A compositionally biased stretch (pro residues) spans 1–10 (MHGPLAPAPS). Residues 1 to 35 (MHGPLAPAPSPERLGAAPARQRSDGRIRLRVGPAR) form a disordered region.

This sequence belongs to the UreD family. As to quaternary structure, ureD, UreF and UreG form a complex that acts as a GTP-hydrolysis-dependent molecular chaperone, activating the urease apoprotein by helping to assemble the nickel containing metallocenter of UreC. The UreE protein probably delivers the nickel.

The protein localises to the cytoplasm. In terms of biological role, required for maturation of urease via the functional incorporation of the urease nickel metallocenter. The polypeptide is Urease accessory protein UreD 1 (Methylobacterium radiotolerans (strain ATCC 27329 / DSM 1819 / JCM 2831 / NBRC 15690 / NCIMB 10815 / 0-1)).